The primary structure comprises 456 residues: 1,3-beta-glucanosyltransferase gas4 (456 aa).

The N-terminal stretch at 1-25 (MGVANIIYALFLLGPSIFLKATAQT) is a signal peptide. Cys-68 and Cys-97 form a disulfide bridge. Residues Tyr-86, Asn-156, Glu-157, Asp-197, and Arg-202 each contribute to the (1,3-beta-D-glucosyl)n site. Catalysis depends on Glu-157, which acts as the Proton donor. 2 cysteine pairs are disulfide-bonded: Cys-211–Cys-350 and Cys-229–Cys-260. N-linked (GlcNAc...) asparagine glycosylation is present at Asn-248. Catalysis depends on Glu-257, which acts as the Nucleophile. Tyr-296 is a binding site for (1,3-beta-D-glucosyl)n. Disordered stretches follow at residues 334–353 (NPKG…CPAN) and 384–434 (IEGP…ESGS). N-linked (GlcNAc...) asparagine glycans are attached at residues Asn-353 and Asn-415. Positions 417–434 (TSTTSYTSGMTSSSESGS) are enriched in low complexity. Ser-432 carries the GPI-anchor amidated serine lipid modification. The propeptide at 433-456 (GSSKIGVAFCQALFITVLIATLSF) is removed in mature form.

Belongs to the glycosyl hydrolase 72 family.

The protein resides in the cell membrane. Functionally, splits internally a 1,3-beta-glucan molecule and transfers the newly generated reducing end (the donor) to the non-reducing end of another 1,3-beta-glucan molecule (the acceptor) forming a 1,3-beta linkage, resulting in the elongation of 1,3-beta-glucan chains in the cell wall. Involved in spore wall assembly. This Schizosaccharomyces pombe (strain 972 / ATCC 24843) (Fission yeast) protein is 1,3-beta-glucanosyltransferase gas4 (gas4).